We begin with the raw amino-acid sequence, 289 residues long: uncharacterized protein (289 aa).

Residues 1-19 (MAKWLGAPLARGVSTATRA) form the signal peptide. 2 helical membrane passes run 90–110 (GLLAAAFVASVLLGVGIGWGV) and 257–277 (AALSLSLYVSSDYGGGYLVFA).

It is found in the cell membrane. This is an uncharacterized protein from Mycobacterium tuberculosis (strain ATCC 25618 / H37Rv).